The following is a 971-amino-acid chain: Breast cancer type 2 susceptibility protein homolog (971 aa).

A compositionally biased stretch (polar residues) spans 1–15 (MDQNGASGSHPNRLS). 4 disordered regions span residues 1–30 (MDQN…ATVS), 130–155 (SRKR…LSVQ), 349–395 (KLKL…DQPN), and 420–466 (MQCS…SSHQ). Residues 130 to 139 (SRKRDPKSHK) are compositionally biased toward basic residues. The span at 349–364 (KLKLEPSSQKEQKSSK) shows a compositional bias: basic and acidic residues. 3 stretches are compositionally biased toward polar residues: residues 375–392 (SKQS…TILD), 420–432 (MQCS…SKNA), and 453–466 (KQTP…SSHQ). BRCA2 repeat units lie at residues 570–604 (AEPE…EFQS), 671–705 (NESQ…QSKA), and 746–780 (SETE…EFQA). Residues 916-971 (MERFAPKPSSTSTPLADRDLNRSKDCTKNRQDAEDMSPICMQPKKSRRLGLSRSRY) are disordered. The segment covering 931–948 (ADRDLNRSKDCTKNRQDA) has biased composition (basic and acidic residues). A compositionally biased stretch (basic residues) spans 959–971 (KKSRRLGLSRSRY).

As to quaternary structure, interacts with Rad9. Interacts with spn-A/Rad51. Interacts with cyclin CycG.

The protein resides in the nucleus. Involved in and required for double-strand break repair by meiotic and mitotic homologous recombination. During meiosis, has a dual role in the repair of meiotic double-stranded breaks and the efficient activation of the meiotic recombination checkpoint. The chain is Breast cancer type 2 susceptibility protein homolog from Drosophila melanogaster (Fruit fly).